Reading from the N-terminus, the 162-residue chain is Small ribosomal subunit protein uS9 (162 aa).

Belongs to the universal ribosomal protein uS9 family.

In Parvibaculum lavamentivorans (strain DS-1 / DSM 13023 / NCIMB 13966), this protein is Small ribosomal subunit protein uS9.